The following is a 551-amino-acid chain: Pyrroline-5-carboxylate reductase 1 (551 aa).

Residues 279–551 (LYTQKQQNKK…RHEVKTEQIN (273 aa)) are disordered. Low complexity-rich tracts occupy residues 282 to 298 (QKQQ…QQHQ), 306 to 342 (QQHQ…YGHQ), 383 to 415 (QQYQ…SNQR), 424 to 441 (KSPQ…QPSS), 448 to 475 (QQQQ…QQQP), 487 to 496 (QQQQPQQQQQ), and 503 to 520 (YNNN…NNYN). The span at 537-551 (YHDEKRHEVKTEQIN) shows a compositional bias: basic and acidic residues.

This sequence belongs to the pyrroline-5-carboxylate reductase family. In terms of assembly, homodecamer; composed of 5 homodimers.

The enzyme catalyses L-proline + NADP(+) = (S)-1-pyrroline-5-carboxylate + NADPH + 2 H(+). The catalysed reaction is L-proline + NAD(+) = (S)-1-pyrroline-5-carboxylate + NADH + 2 H(+). Its pathway is amino-acid biosynthesis; L-proline biosynthesis; L-proline from L-glutamate 5-semialdehyde: step 1/1. The sequence is that of Pyrroline-5-carboxylate reductase 1 (pycr1) from Dictyostelium discoideum (Social amoeba).